The primary structure comprises 391 residues: uncharacterized protein (391 aa).

Helical transmembrane passes span 7–27, 39–59, 66–88, 92–111, 131–151, 156–176, 197–217, 239–259, 269–289, 292–312, 329–349, and 356–376; these read FILV…LPVI, AING…SPFM, LGFK…GFIW, VWVW…MLHF, SIYG…VPLV, SLPF…VFFL, FYQA…YGFL, VAII…PLGI, VLLV…VFPS, VIGG…TLGI, LLCG…GGWY, and ANLF…LVLG.

The protein belongs to the major facilitator superfamily.

Its subcellular location is the cell membrane. This is an uncharacterized protein from Bacillus subtilis (strain 168).